Here is a 187-residue protein sequence, read N- to C-terminus: Elongation factor P (187 aa).

This sequence belongs to the elongation factor P family.

The protein resides in the cytoplasm. It functions in the pathway protein biosynthesis; polypeptide chain elongation. In terms of biological role, involved in peptide bond synthesis. Stimulates efficient translation and peptide-bond synthesis on native or reconstituted 70S ribosomes in vitro. Probably functions indirectly by altering the affinity of the ribosome for aminoacyl-tRNA, thus increasing their reactivity as acceptors for peptidyl transferase. The chain is Elongation factor P from Synechococcus sp. (strain WH7803).